The chain runs to 207 residues: LexA repressor (207 aa).

The H-T-H motif DNA-binding region spans 28 to 47 (VREIARRFRITPRGAQLHLV). Active-site for autocatalytic cleavage activity residues include S119 and K156.

This sequence belongs to the peptidase S24 family. Homodimer.

The catalysed reaction is Hydrolysis of Ala-|-Gly bond in repressor LexA.. Its function is as follows. Represses a number of genes involved in the response to DNA damage (SOS response), including recA and lexA. In the presence of single-stranded DNA, RecA interacts with LexA causing an autocatalytic cleavage which disrupts the DNA-binding part of LexA, leading to derepression of the SOS regulon and eventually DNA repair. This Thermotoga neapolitana (strain ATCC 49049 / DSM 4359 / NBRC 107923 / NS-E) protein is LexA repressor.